The primary structure comprises 101 residues: ATP-dependent Clp protease adapter protein ClpS (101 aa).

The protein belongs to the ClpS family. Binds to the N-terminal domain of the chaperone ClpA.

Involved in the modulation of the specificity of the ClpAP-mediated ATP-dependent protein degradation. The protein is ATP-dependent Clp protease adapter protein ClpS of Corynebacterium efficiens (strain DSM 44549 / YS-314 / AJ 12310 / JCM 11189 / NBRC 100395).